A 278-amino-acid chain; its full sequence is Sulfur carrier protein FdhD (278 aa).

The active-site Cysteine persulfide intermediate is Cys-121. Position 260–265 (260–265 (FCKPGR)) interacts with Mo-bis(molybdopterin guanine dinucleotide).

This sequence belongs to the FdhD family.

The protein localises to the cytoplasm. Required for formate dehydrogenase (FDH) activity. Acts as a sulfur carrier protein that transfers sulfur from IscS to the molybdenum cofactor prior to its insertion into FDH. In Salmonella newport (strain SL254), this protein is Sulfur carrier protein FdhD.